A 168-amino-acid polypeptide reads, in one-letter code: Cell division inhibitor SulA (168 aa).

The tract at residues 105–111 is ftsZ binding; sequence ALQTGNY.

It belongs to the SulA family. As to quaternary structure, interacts with FtsZ. Post-translationally, is rapidly cleaved and degraded by the Lon protease once DNA damage is repaired.

In terms of biological role, component of the SOS system and an inhibitor of cell division. Accumulation of SulA causes rapid cessation of cell division and the appearance of long, non-septate filaments. In the presence of GTP, binds a polymerization-competent form of FtsZ in a 1:1 ratio, thus inhibiting FtsZ polymerization and therefore preventing it from participating in the assembly of the Z ring. This mechanism prevents the premature segregation of damaged DNA to daughter cells during cell division. This chain is Cell division inhibitor SulA, found in Erwinia pyrifoliae (strain DSM 12163 / CIP 106111 / Ep16/96).